The following is a 3646-amino-acid chain: Platelet adherence protein A (3646 aa).

Positions 1–33 (MKDFLKKVLILFTVLLMSMPSSVLNLGTSVVRA) are cleaved as a signal peptide. Positions 34-359 (DDPLNIETRR…KNVSFYVNEQ (326 aa)) are does not bind platelets. Residues 34–690 (DDPLNIETRR…NQDAHAKTKD (657 aa)) form an F2, binds platelets, fibronectin, vitronectin, salivary pellicle, causes ADP secretion by dense granules region. The tract at residues 34 to 1328 (DDPLNIETRR…KFVLSDTLEE (1295 aa)) is binds platelets. The 299-residue stretch at 75-373 (DLVILQDASG…VFSQKILESV (299 aa)) folds into the VWFA domain. Positions 214 to 216 (NGR) match the Integrin-like recognition motif NGR motif. An Integrin-like recognition motif RGT motif is present at residues 416-418 (RGT). Positions 439-466 (KNSFDYDLSKEARAPETDEDSEVDPPEN) are disordered. The span at 445–454 (DLSKEARAPE) shows a compositional bias: basic and acidic residues. The short motif at 485-487 (AGD) is the Integrin-like recognition motif AGD element. A central region with RrgB repeats region spans residues 709 to 3205 (TEVDKKVNEK…TVPNKATIAF (2497 aa)). Basic and acidic residues-rich tracts occupy residues 1124–1135 (KDKNDHKGEKET) and 1563–1573 (DHNPKFHKDSN). 12 disordered regions span residues 1124-1153 (KDKN…KKIN), 1563-1589 (DHNP…PIEK), 2011-2036 (FNND…EPEL), 2170-2198 (EKDS…KPSA), 2320-2343 (KTEK…IKKE), 2467-2492 (PNRP…PEIK), 2611-2644 (ASYR…PIEK), 2767-2792 (FNND…EPEL), 2916-2948 (PNKP…NSKP), 3202-3252 (TIAF…NPST), 3371-3412 (AAAK…AALE), and 3550-3618 (NDKP…PKTG). Over residues 2011–2022 (FNNDPGTEQSSK) the composition is skewed to polar residues. A compositionally biased stretch (polar residues) spans 2767-2778 (FNNDPGTEQSSK). Polar residues predominate over residues 3210 to 3220 (GKNGTKESNPV). The segment covering 3223-3237 (RPRDPEKPEEPKPNE) has biased composition (basic and acidic residues). 2 coiled-coil regions span residues 3326–3376 (IAKI…AKEK) and 3408–3475 (VAAL…VNDK). Low complexity predominate over residues 3371-3406 (AAAKEKAAAAPATPAPASDSDAGNATATPAPADNNA). The span at 3550-3560 (NDKPKVTNTVN) shows a compositional bias: polar residues. The segment covering 3563-3605 (PPEPTTPPQTPPHTPPTTPGTPPPTTPDTPPAPKGDLPPAPTP) has biased composition (pro residues). The LPXTG sorting signal signature appears at 3614-3618 (LPKTG). T3617 is modified (pentaglycyl murein peptidoglycan amidated threonine). Positions 3618–3646 (GTSATMVNEVIIGMILVLMGLLLRRKPKH) are cleaved as a propeptide — removed by sortase.

It is found in the secreted. The protein resides in the cell wall. Whole bacterial adhesion to Chinese hamster ovary cells expressing GPIIbIIIa is abrogated by integrin inhibitor RGDS and GPIIbIIIa inhibitor Abciximab. A cell wall protein involved with Hsa in host cell interactions required for colonization and pathogenesis. Involved in recognition of platelets. Interacts with human platelet integrin receptor GPIIbIIIa (a complex of ITGA2B and ITGB3). Involved in platelet spreading, presumably by activation of outside-in signaling leading to platelet activation and then spreading. Spreading also involves GPIIbIIIa. Binding to platelets under static conditions causes platelet dense granules to secrete ADP (similar to release induced by fibrinogen binding), has no effect on platelet alpha granule release. The N-terminal 656 aa residue fragment (called F2) also binds platelets, causes dense granule secretion and allows platelet spreading. Acts in concert with Hsa to promote binding to human fibronectin (FN1) and vitronectin (VTN), and biofilm formation. F2 bind activated platelets more strongly than unactivated platelets. Binding to both FN1 and VTN is mediated at least in part by their glycosylation. This Streptococcus gordonii (strain Challis / ATCC 35105 / BCRC 15272 / CH1 / DL1 / V288) protein is Platelet adherence protein A.